A 266-amino-acid polypeptide reads, in one-letter code: tRNA pseudouridine synthase A (266 aa).

The active-site Nucleophile is D52. Position 113 (Y113) interacts with substrate.

It belongs to the tRNA pseudouridine synthase TruA family. In terms of assembly, homodimer.

The catalysed reaction is uridine(38/39/40) in tRNA = pseudouridine(38/39/40) in tRNA. Formation of pseudouridine at positions 38, 39 and 40 in the anticodon stem and loop of transfer RNAs. The polypeptide is tRNA pseudouridine synthase A (Agrobacterium fabrum (strain C58 / ATCC 33970) (Agrobacterium tumefaciens (strain C58))).